Reading from the N-terminus, the 827-residue chain is Sporozoite surface protein 2 (827 aa).

The N-terminal stretch at 1–22 (MKLLGNSKYIFVVLLLCISVFL) is a signal peptide. The VWFA domain occupies 43–228 (DIHILLDGSG…NMIKPFLTKV (186 aa)). The TSP type-1 domain occupies 235-281 (IAHCGKWEEWSECSTTCDEGRKIRRRQILHPGCVSEMTTPCKVRDCP). Disulfide bonds link C238–C267, C247–C275, and C251–C280. Residues 278–761 (RDCPQIPIPP…NKNQSKSNNG (484 aa)) form a disordered region. Positions 301–388 (EEPVNPNDPN…NNPNDPSNPN (88 aa)) are enriched in low complexity. Residues 306-392 (PNDPNDPNNP…DPSNPNNPNP (87 aa)) are 29 X 3 AA tandem repeats. Over residues 392 to 407 (PKKRNPKRRNPNKPKP) the composition is skewed to basic residues. The segment at 402-514 (PNKPKPNKPN…EPSNPNEPSN (113 aa)) is 20 tandem tetra-/hexapeptide repeats. Over residues 408–464 (NKPNPNKPNPNEPSNPNKPNPNEPSNPNKPNPNEPSNPNKPNPNEPSNPNKPNPNEP) the composition is skewed to pro residues. The span at 465-567 (LNPNEPSNPN…KEPSNPNEPS (103 aa)) shows a compositional bias: low complexity. 2 repeat units span residues 603-613 (PEESNPKEPIN) and 614-624 (PEESNPKEPIN). Residues 603–624 (PEESNPKEPINPEESNPKEPIN) are 2 X 11 AA tandem repeats. The span at 657–671 (KGNNIPSNLPENPSD) shows a compositional bias: polar residues. Positions 709 to 724 (YKGHEERIPKPHRSND) are enriched in basic and acidic residues. The helical transmembrane segment at 764 to 787 (IAGGIIGGLAILGCAGVGYNFIAG) threads the bilayer.

Its subcellular location is the cell membrane. The polypeptide is Sporozoite surface protein 2 (SSP2) (Plasmodium yoelii yoelii).